Here is a 417-residue protein sequence, read N- to C-terminus: Chaperone SurA (417 aa).

An N-terminal signal peptide occupies residues 1–12; sequence MGAALLCSFAHA. 2 PpiC domains span residues 163–264 and 273–372; these read SEEY…KLEE and RDEV…QVLG.

It localises to the periplasm. It catalyses the reaction [protein]-peptidylproline (omega=180) = [protein]-peptidylproline (omega=0). In terms of biological role, chaperone involved in the correct folding and assembly of outer membrane proteins. Recognizes specific patterns of aromatic residues and the orientation of their side chains, which are found more frequently in integral outer membrane proteins. May act in both early periplasmic and late outer membrane-associated steps of protein maturation. This is Chaperone SurA from Pseudomonas aeruginosa (strain ATCC 15692 / DSM 22644 / CIP 104116 / JCM 14847 / LMG 12228 / 1C / PRS 101 / PAO1).